Consider the following 309-residue polypeptide: Homoserine kinase (309 aa).

91-101 (PIGSGLGSSAC) lines the ATP pocket.

It belongs to the GHMP kinase family. Homoserine kinase subfamily.

It is found in the cytoplasm. The catalysed reaction is L-homoserine + ATP = O-phospho-L-homoserine + ADP + H(+). It functions in the pathway amino-acid biosynthesis; L-threonine biosynthesis; L-threonine from L-aspartate: step 4/5. In terms of biological role, catalyzes the ATP-dependent phosphorylation of L-homoserine to L-homoserine phosphate. The polypeptide is Homoserine kinase (Serratia proteamaculans (strain 568)).